A 359-amino-acid polypeptide reads, in one-letter code: Trans-enoyl reductase RAP1 (359 aa).

Position 49–52 (49–52) interacts with NADP(+); the sequence is CDFK. A substrate-binding site is contributed by 137–144; the sequence is TCIATACM. NADP(+) contacts are provided by residues 195-198, Tyr-213, and 260-261; these read SPKN and LE. Substrate is bound at residue 281 to 285; the sequence is GQMIL. 350–351 lines the NADP(+) pocket; sequence VA.

The protein belongs to the zinc-containing alcohol dehydrogenase family. In terms of assembly, monomer.

The protein operates within secondary metabolite biosynthesis. Functionally, trans-enoyl reductase; part of the gene cluster that mediates the biosynthesis of a tyrosine-derived cytochalasan acting as a fungal signal recognized by resistant rice plants and leads to avirulence in Pi33 resistant rice cultivars. The first step in the pathway is catalyzed by the hybrid PKS-NRPS ACE1, assisted by the enoyl reductase RAP1, that are responsible for fusion of the tyrosine precursor and the polyketide backbone. The polyketide synthase module (PKS) of ACE1 is responsible for the synthesis of the polyketide backbone and the downstream nonribosomal peptide synthetase (NRPS) amidates the carboxyl end of the polyketide with the tyrosine precursor. Because ACE1 lacks a designated enoylreductase (ER) domain, the required activity is provided the enoyl reductase RAP1. Reduction by the hydrolyase ORFZ, followed by dehydration and intra-molecular Diels-Alder cyclization by the Diels-Alderase ORF3 then yield the required isoindolone-fused macrocycle. A number of oxidative steps catalyzed by the tailoring enzymes identified within the cluster, including cytochrome P450 monooxygenases CYP1 to CYP4, the FAD-linked oxidoreductase OXR2 and the short-chain dehydrogenase/reductase OXR1, are further required to afford the final cytochalasans that confer avirulence and which have still to be identified. The monooxygenase CYP1 has been shown to be a site-selective C-18 hydroxylase whereas the function of CYP3 is the site-selective epoxidation of the C-6/C-7 olefin that is present in some intermediate compounds. Finally, SYN2 and RAP2 are not required for avirulence in Pi33 resistant rice cultivars. The protein is Trans-enoyl reductase RAP1 of Pyricularia oryzae (strain 70-15 / ATCC MYA-4617 / FGSC 8958) (Rice blast fungus).